The primary structure comprises 259 residues: METLQIAGKTFESRLFVGTGKFASSDLMEAAVLASQSRMVTVALKRVEIGRVEEDDMISRITRHPEITLLPNTSGVRSAKEAILAAELAREALQTNWLKLEVHPDPRYLLPDPIETLRATEELVRRGFIVLPYVQADPVLCKHLEEAGAATVMPLGAPIGSNRGLKTREMIRIIIEQSRVPVVIDAGIGAPSQAAEAMEMGADAVLVNTAIAVAEDPVSMATAFRLAVEAGRMAFEAKLGSVRSEAEASSPFTSFLNLK.

The active-site Schiff-base intermediate with DXP is Lys-99. 1-deoxy-D-xylulose 5-phosphate contacts are provided by residues Gly-160, 186 to 187, and 208 to 209; these read AG and NT.

It belongs to the ThiG family. In terms of assembly, homotetramer. Forms heterodimers with either ThiH or ThiS.

The protein localises to the cytoplasm. It catalyses the reaction [ThiS sulfur-carrier protein]-C-terminal-Gly-aminoethanethioate + 2-iminoacetate + 1-deoxy-D-xylulose 5-phosphate = [ThiS sulfur-carrier protein]-C-terminal Gly-Gly + 2-[(2R,5Z)-2-carboxy-4-methylthiazol-5(2H)-ylidene]ethyl phosphate + 2 H2O + H(+). It participates in cofactor biosynthesis; thiamine diphosphate biosynthesis. In terms of biological role, catalyzes the rearrangement of 1-deoxy-D-xylulose 5-phosphate (DXP) to produce the thiazole phosphate moiety of thiamine. Sulfur is provided by the thiocarboxylate moiety of the carrier protein ThiS. In vitro, sulfur can be provided by H(2)S. This chain is Thiazole synthase, found in Porphyromonas gingivalis (strain ATCC BAA-308 / W83).